A 155-amino-acid chain; its full sequence is Aspartate carbamoyltransferase regulatory chain (155 aa).

Positions 113, 118, 139, and 142 each coordinate Zn(2+).

It belongs to the PyrI family. As to quaternary structure, contains catalytic and regulatory chains. It depends on Zn(2+) as a cofactor.

Involved in allosteric regulation of aspartate carbamoyltransferase. This is Aspartate carbamoyltransferase regulatory chain from Methanoculleus marisnigri (strain ATCC 35101 / DSM 1498 / JR1).